The chain runs to 371 residues: MSTNNSDIRVVVGMSGGVDSSVTAHILKEQGYDVIGIFMKNWDDTDEFGVCTATEDYDDVIRVANQIGIPYYAVNFEKEYWDKVFTYFLDEYKLGRTPNPDVMCNKEIKFKAFLEHAESLGADYVATGHYAQVKKVGDEIELLRGVDNNKDQTYFLNQLSQDQLKKVMFPLGGMEKTEVREIATKAGLATANKKDSTGICFIGERNFKQFLSEYLPAQPGDMRTLNGEVLGKHDGLMYYTIGQRHGLGIGGDGEPWFVVGKDLKNNVLFVEQGFHHDSLYSDSLIATDISFTTNSEKPKTFVCTAKFRYRQTDTKVTVNMREDGTAEVVFADPVRAITPGQAVVFYDGDICLGGGTIDTVWKKGAKLNYVG.

ATP-binding positions include 13–20 and methionine 39; that span reads GMSGGVDS. Residues 99 to 101 form an interaction with target base in tRNA region; the sequence is NPD. The active-site Nucleophile is cysteine 104. The cysteines at positions 104 and 200 are disulfide-linked. Glycine 128 contacts ATP. The segment at 150-152 is interaction with tRNA; it reads KDQ. Catalysis depends on cysteine 200, which acts as the Cysteine persulfide intermediate. An interaction with tRNA region spans residues 308-309; sequence RY.

This sequence belongs to the MnmA/TRMU family.

The protein localises to the cytoplasm. It carries out the reaction S-sulfanyl-L-cysteinyl-[protein] + uridine(34) in tRNA + AH2 + ATP = 2-thiouridine(34) in tRNA + L-cysteinyl-[protein] + A + AMP + diphosphate + H(+). In terms of biological role, catalyzes the 2-thiolation of uridine at the wobble position (U34) of tRNA, leading to the formation of s(2)U34. This is tRNA-specific 2-thiouridylase MnmA from Listeria innocua serovar 6a (strain ATCC BAA-680 / CLIP 11262).